Reading from the N-terminus, the 1269-residue chain is Clustered mitochondria protein homolog (1269 aa).

Positions 297–552 (PSNNGDFMRT…NTNPVDIEFV (256 aa)) constitute a Clu domain. The segment covering 958-969 (EKKKEESKKAAA) has biased composition (basic and acidic residues). Residues 958 to 989 (EKKKEESKKAAADGEDAGSSGATSKEEEQAKE) are disordered. 2 TPR repeats span residues 1020 to 1053 (VSSY…SERC) and 1147 to 1180 (GQNE…FSKE). Residues 1211–1269 (LASAQQATKPANISQKKGKKSSSSSPALTNKSVDELLQFIEGPGASKSSKKSKKKHTKN) are disordered. Residues 1213–1223 (SAQQATKPANI) show a composition bias toward polar residues. Positions 1258-1269 (SSKKSKKKHTKN) are enriched in basic residues.

The protein belongs to the CLU family. As to quaternary structure, may associate with the eukaryotic translation initiation factor 3 (eIF-3) complex.

It is found in the cytoplasm. Its function is as follows. mRNA-binding protein involved in proper cytoplasmic distribution of mitochondria. The protein is Clustered mitochondria protein homolog of Kluyveromyces lactis (strain ATCC 8585 / CBS 2359 / DSM 70799 / NBRC 1267 / NRRL Y-1140 / WM37) (Yeast).